An 83-amino-acid chain; its full sequence is Large ribosomal subunit protein uL23 (83 aa).

This sequence belongs to the universal ribosomal protein uL23 family. As to quaternary structure, part of the 50S ribosomal subunit. Contacts protein L29.

Its function is as follows. Binds to 23S rRNA. One of the proteins that surrounds the polypeptide exit tunnel on the outside of the ribosome. This chain is Large ribosomal subunit protein uL23, found in Thermoplasma volcanium (strain ATCC 51530 / DSM 4299 / JCM 9571 / NBRC 15438 / GSS1).